The following is a 412-amino-acid chain: Argininosuccinate synthase (412 aa).

ATP is bound by residues 20–28 (AYSGGLDTS) and Ala48. L-citrulline is bound by residues Tyr100 and Ser105. An ATP-binding site is contributed by Gly130. L-aspartate is bound by residues Thr132, Asn136, and Asp137. Residue Asn136 coordinates L-citrulline. 5 residues coordinate L-citrulline: Arg140, Ser189, Ser198, Glu274, and Tyr286.

The protein belongs to the argininosuccinate synthase family. Type 1 subfamily. In terms of assembly, homotetramer.

The protein resides in the cytoplasm. It catalyses the reaction L-citrulline + L-aspartate + ATP = 2-(N(omega)-L-arginino)succinate + AMP + diphosphate + H(+). Its pathway is amino-acid biosynthesis; L-arginine biosynthesis; L-arginine from L-ornithine and carbamoyl phosphate: step 2/3. This is Argininosuccinate synthase from Shewanella pealeana (strain ATCC 700345 / ANG-SQ1).